The chain runs to 788 residues: Ciliated left-right organizer metallopeptidase (788 aa).

An N-terminal signal peptide occupies residues 1-20 (MLLLLLLLLLLPPLVLRVAA). The Extracellular segment spans residues 21–735 (SRCLHDETQK…DHNPSMTHLR (715 aa)). Residues 40-56 (SQLPSKSRSSSLTLPSS) show a composition bias toward low complexity. A disordered region spans residues 40-59 (SQLPSKSRSSSLTLPSSRDP). Residue histidine 305 participates in Zn(2+) binding. The active site involves glutamate 306. Histidine 309 serves as a coordination point for Zn(2+). Asparagine 333 carries an N-linked (GlcNAc...) asparagine glycan. Zn(2+) is bound at residue histidine 385. N-linked (GlcNAc...) asparagine glycans are attached at residues asparagine 425, asparagine 491, asparagine 524, and asparagine 713. Residues 736–756 (LSMGLCLMLLILVGVMGTTAY) traverse the membrane as a helical segment. At 757-788 (QKRATLPVRPSASYHSPELHSTRVPVRGIREV) the chain is on the cytoplasmic side. The disordered stretch occupies residues 767–788 (SASYHSPELHSTRVPVRGIREV).

The protein belongs to the peptidase M8 family. Zn(2+) is required as a cofactor.

It localises to the membrane. Its function is as follows. Putative metalloproteinase that plays a role in left-right patterning process. The sequence is that of Ciliated left-right organizer metallopeptidase from Homo sapiens (Human).